Consider the following 358-residue polypeptide: Heme A synthase (358 aa).

Helical transmembrane passes span 22 to 42 (IQVW…VGGA), 107 to 127 (VLGR…WVTK), 133 to 153 (IFLQ…IGWW), 172 to 192 (LAIH…LSRG), 208 to 228 (FAGW…LVAG), 269 to 289 (FVHR…ALYV), 302 to 322 (AIFL…TLLH), and 324 to 344 (VPIS…CFSV). His-271 lines the heme pocket. His-332 lines the heme pocket.

Belongs to the COX15/CtaA family. Type 2 subfamily. As to quaternary structure, interacts with CtaB. It depends on heme b as a cofactor.

Its subcellular location is the cell membrane. It carries out the reaction Fe(II)-heme o + 2 A + H2O = Fe(II)-heme a + 2 AH2. Its pathway is porphyrin-containing compound metabolism; heme A biosynthesis; heme A from heme O: step 1/1. In terms of biological role, catalyzes the conversion of heme O to heme A by two successive hydroxylations of the methyl group at C8. The first hydroxylation forms heme I, the second hydroxylation results in an unstable dihydroxymethyl group, which spontaneously dehydrates, resulting in the formyl group of heme A. In Bartonella bacilliformis (strain ATCC 35685 / KC583 / Herrer 020/F12,63), this protein is Heme A synthase.